A 53-amino-acid polypeptide reads, in one-letter code: ATP synthase protein 8 (53 aa).

Residues 9–29 (WITSMLMFWISVSILFSTLWW) traverse the membrane as a helical segment.

This sequence belongs to the ATPase protein 8 family. As to quaternary structure, F-type ATPases have 2 components, CF(1) - the catalytic core - and CF(0) - the membrane proton channel.

The protein resides in the mitochondrion membrane. In terms of biological role, mitochondrial membrane ATP synthase (F(1)F(0) ATP synthase or Complex V) produces ATP from ADP in the presence of a proton gradient across the membrane which is generated by electron transport complexes of the respiratory chain. F-type ATPases consist of two structural domains, F(1) - containing the extramembraneous catalytic core and F(0) - containing the membrane proton channel, linked together by a central stalk and a peripheral stalk. During catalysis, ATP synthesis in the catalytic domain of F(1) is coupled via a rotary mechanism of the central stalk subunits to proton translocation. Part of the complex F(0) domain. Minor subunit located with subunit a in the membrane. In Lumbricus terrestris (Common earthworm), this protein is ATP synthase protein 8 (MT-ATP8).